A 492-amino-acid polypeptide reads, in one-letter code: Trypanothione reductase (492 aa).

35–52 (DVQTVHGPPFFAALGGTC) serves as a coordination point for FAD. Cysteine 52 and cysteine 57 are oxidised to a cystine. Catalysis depends on histidine 461, which acts as the Proton acceptor.

This sequence belongs to the class-I pyridine nucleotide-disulfide oxidoreductase family. Homodimer. The cofactor is FAD.

Its subcellular location is the cytoplasm. The catalysed reaction is trypanothione + NADP(+) = trypanothione disulfide + NADPH + H(+). In terms of biological role, trypanothione is the parasite analog of glutathione; this enzyme is the equivalent of glutathione reductase. The chain is Trypanothione reductase (TPR) from Trypanosoma congolense.